Reading from the N-terminus, the 342-residue chain is GTPase Obg (342 aa).

An Obg domain is found at 1–159; it reads MKFLDEAKVY…HWLWLRLKLI (159 aa). Residues 160–327 form the OBG-type G domain; the sequence is ADAGLVGLPN…ALRALMAAMD (168 aa). GTP is bound by residues 166–173, 191–195, 212–215, 279–282, and 308–310; these read GLPNAGKS, FTTLH, DIPG, SKAD, and SAA. The Mg(2+) site is built by Ser173 and Thr193.

Belongs to the TRAFAC class OBG-HflX-like GTPase superfamily. OBG GTPase family. As to quaternary structure, monomer. Mg(2+) is required as a cofactor.

The protein localises to the cytoplasm. Functionally, an essential GTPase which binds GTP, GDP and possibly (p)ppGpp with moderate affinity, with high nucleotide exchange rates and a fairly low GTP hydrolysis rate. Plays a role in control of the cell cycle, stress response, ribosome biogenesis and in those bacteria that undergo differentiation, in morphogenesis control. This chain is GTPase Obg, found in Methylobacterium nodulans (strain LMG 21967 / CNCM I-2342 / ORS 2060).